A 204-amino-acid chain; its full sequence is Ribonuclease HII (204 aa).

An RNase H type-2 domain is found at glycine 13–serine 204. The a divalent metal cation site is built by aspartate 19, glutamate 20, and aspartate 113.

This sequence belongs to the RNase HII family. Requires Mn(2+) as cofactor. The cofactor is Mg(2+).

Its subcellular location is the cytoplasm. The enzyme catalyses Endonucleolytic cleavage to 5'-phosphomonoester.. Functionally, endonuclease that specifically degrades the RNA of RNA-DNA hybrids. The polypeptide is Ribonuclease HII (Cutibacterium acnes (strain DSM 16379 / KPA171202) (Propionibacterium acnes)).